A 122-amino-acid chain; its full sequence is Conotoxin flf14c (122 aa).

Residues 1–22 (MGFRVLVLIVMVTTSALPFTFS) form the signal peptide. A propeptide spanning residues 23-96 (EESGRSPFRP…AESPVGQKRW (74 aa)) is cleaved from the precursor. The disordered stretch occupies residues 53–89 (RADGQTPDMHQPEMRRPEMRRPEVRRPEVRQPEFAES). Residues 62–85 (HQPEMRRPEMRRPEVRRPEVRQPE) show a composition bias toward basic and acidic residues. Intrachain disulfides connect cysteine 101-cysteine 121 and cysteine 105-cysteine 117.

In terms of tissue distribution, expressed by the venom duct.

The protein localises to the secreted. This chain is Conotoxin flf14c, found in Conus anabathrum floridanus (Florida cone).